Consider the following 631-residue polypeptide: Chaperone protein DnaK (631 aa).

A Phosphothreonine; by autocatalysis modification is found at Thr-198. The tract at residues 598 to 631 (YSAQQGGEQPGAAKKDDVVDAEFTEVDDDKKKSA) is disordered.

The protein belongs to the heat shock protein 70 family.

In terms of biological role, acts as a chaperone. This chain is Chaperone protein DnaK, found in Azorhizobium caulinodans (strain ATCC 43989 / DSM 5975 / JCM 20966 / LMG 6465 / NBRC 14845 / NCIMB 13405 / ORS 571).